The chain runs to 91 residues: Small ribosomal subunit protein uS19 (91 aa).

It belongs to the universal ribosomal protein uS19 family.

In terms of biological role, protein S19 forms a complex with S13 that binds strongly to the 16S ribosomal RNA. The protein is Small ribosomal subunit protein uS19 of Neorickettsia sennetsu (strain ATCC VR-367 / Miyayama) (Ehrlichia sennetsu).